The sequence spans 166 residues: Large ribosomal subunit protein uL10 (166 aa).

Belongs to the universal ribosomal protein uL10 family. As to quaternary structure, part of the ribosomal stalk of the 50S ribosomal subunit. The N-terminus interacts with L11 and the large rRNA to form the base of the stalk. The C-terminus forms an elongated spine to which L12 dimers bind in a sequential fashion forming a multimeric L10(L12)X complex.

Forms part of the ribosomal stalk, playing a central role in the interaction of the ribosome with GTP-bound translation factors. This Tropheryma whipplei (strain TW08/27) (Whipple's bacillus) protein is Large ribosomal subunit protein uL10.